A 308-amino-acid chain; its full sequence is 1D-myo-inositol 2-acetamido-2-deoxy-alpha-D-glucopyranoside deacetylase (308 aa).

Residues His37, Asp40, and His171 each coordinate Zn(2+).

The protein belongs to the MshB deacetylase family. It depends on Zn(2+) as a cofactor.

The enzyme catalyses 1D-myo-inositol 2-acetamido-2-deoxy-alpha-D-glucopyranoside + H2O = 1D-myo-inositol 2-amino-2-deoxy-alpha-D-glucopyranoside + acetate. Functionally, catalyzes the deacetylation of 1D-myo-inositol 2-acetamido-2-deoxy-alpha-D-glucopyranoside (GlcNAc-Ins) in the mycothiol biosynthesis pathway. The sequence is that of 1D-myo-inositol 2-acetamido-2-deoxy-alpha-D-glucopyranoside deacetylase from Mycobacterium sp. (strain JLS).